A 214-amino-acid polypeptide reads, in one-letter code: MQLFHLCLIISCTCPTVQASKLCLGWLWGMDIDPYKEFGATVELLSFLPSDFFPSVRDLLDTASALYREALESPEHCSPHHTALRQAILCWGELMTLATWVGNNLEDPASRDLVVNYVNTNMGLKIRQLLWFRISYLTFGRETVLEYLVSFGVWIRTPPAYRPPNAPILSTLPETTVVRRRDRGRSPRRRTPSPRRRRSQSPRRRRSQSRESQC.

An N-terminal signal peptide occupies residues 1–19; the sequence is MQLFHLCLIISCTCPTVQA. Residues 25–27 are HBEAG; that stretch reads GWL. The disordered stretch occupies residues 165 to 214; sequence NAPILSTLPETTVVRRRDRGRSPRRRTPSPRRRRSQSPRRRRSQSRESQC. The segment covering 178–207 has biased composition (basic residues); that stretch reads VRRRDRGRSPRRRTPSPRRRRSQSPRRRRS. The stretch at 186 to 192 is one 1; half-length repeat; that stretch reads SPRRRTP. Residues 186 to 208 are 3 X 8 AA repeats of S-P-R-R-R-R-S-Q; it reads SPRRRTPSPRRRRSQSPRRRRSQ. Positions 186–214 are excised as a propeptide; the sequence is SPRRRTPSPRRRRSQSPRRRRSQSRESQC. 2 tandem repeats follow at residues 193 to 200 and 201 to 208.

Belongs to the orthohepadnavirus precore antigen family. Homodimerizes. Phosphorylated. Post-translationally, cleaved by host furin.

It is found in the secreted. Its subcellular location is the host nucleus. Functionally, may regulate immune response to the intracellular capsid in acting as a T-cell tolerogen, by having an immunoregulatory effect which prevents destruction of infected cells by cytotoxic T-cells. This immune regulation may predispose to chronicity during perinatal infections and prevent severe liver injury during adult infections. The chain is External core antigen from Hepatitis B virus genotype A2 subtype adw2 (isolate Germany/991/1990) (HBV-A).